The sequence spans 93 residues: Putative ribosomal protein eL43-like (93 aa).

Residues 40–61 (CSFCGKTKMKRRAVKIRHCNSC) form a C4-type zinc finger.

Belongs to the eukaryotic ribosomal protein eL43 family.

The polypeptide is Putative ribosomal protein eL43-like (RPL37AP8) (Homo sapiens (Human)).